Consider the following 365-residue polypeptide: Guanine nucleotide-binding protein alpha-6 subunit (365 aa).

A lipid anchor (N-myristoyl glycine) is attached at glycine 2. Residues asparagine 42–histidine 364 form the G-alpha domain. A G1 motif region spans residues lysine 45–threonine 58. Residues glycine 50–serine 57, valine 187–threonine 193, aspartate 212–glutamine 216, asparagine 281–aspartate 284, and alanine 336 contribute to the GTP site. Serine 57 and threonine 193 together coordinate Mg(2+). The segment at aspartate 185–threonine 193 is G2 motif. Residues phenylalanine 208–arginine 217 form a G3 motif region. Residues valine 277–aspartate 284 form a G4 motif region. Residues threonine 334–threonine 339 are G5 motif.

It belongs to the G-alpha family. G proteins are composed of 3 units; alpha, beta and gamma. The alpha chain contains the guanine nucleotide binding site.

Functionally, guanine nucleotide-binding proteins (G proteins) are involved as modulators or transducers in various transmembrane signaling systems. The sequence is that of Guanine nucleotide-binding protein alpha-6 subunit (gpa-6) from Caenorhabditis briggsae.